The chain runs to 968 residues: MPFALGQRWISDTESELGLGTVVQVEGRMVTLLFPATGENRMFSRSEAPLTRVIFNPGDTVESGEGWSITIEELEEKNQLVIYHGIHSETQEKVSLRETMLSHNIRFNKPQDRLFAGQIDRLERFGVRYQCQLLRHKLATSDLLGQQGPRVGLIAHQQWIAHEVGSRYAPRVLLADEVGLGKTIEAGLIIHQQLLTGRAERILVIVPDTLRHQWLVEMLRRFNLRFSVFDEDRCVEAYADNDNPFYTEQLIICSLDLLRKKKRLEQAVDADWDLMVVDEAHHLEWSEDAPSRAYKIVEALSEVVPGVLLLTATPDQLGHQSHFARLRLLDPDRFYDYDAFLAEEASYKDVAEAAEALSQDKKLPDSAINSLTELLSEKDIEPSIRLIQSKDVDAESQQAARQELLQELLDRHGTGRVLYRNSRASVKGFPKRLFNAYPHDMPAQYVTAERVNAMMGSAKQPQAKAAQALSPEKLYQAFENDSASWWKFDPRVDWLIEFLKSHRSKKVLIIASQAETALSLEEALRTREGIQATVFHEDMSIIERDKAGAYFAQEEGGAQALICSEIGSEGRNFQFASHLILFDLPLNPDLLEQRIGRLDRIGQQNDIQIHLPYLRDTAQERLMRWYHQGLNAFELTCPSGHVLFNEFADELINVLCDDDEDLMTQLLNHTQHRYKELKQAMEQGRDKLLEINSHGGERANALIKRLSDSDNDTHLIGSVIRLWDIIGVDQEDRGENSIILRPSEHMMFPTYPGLNEDGITVTFDRETALSRDDIAFITQEHPLVQTGLDLITGSETGTTSVAILKNKALPAGTLFLELIYMADASAPKSTQLYRYLPPTPIRVLLDKNGLNMADKVDYASFDKQLSAVNRHIASKLVNASQPILHPLLAKGEEYAKESLTQLVVDARAKMTQQLTGELERLEALKAVNPNIREDELEYIRNQMTEITGYMDNSQLQLDAIRMVLVSHV.

Residues E163–D332 enclose the Helicase ATP-binding domain. D176–T183 is a binding site for ATP. The DEAH box signature appears at D278–H281. The Helicase C-terminal domain occupies R491–L655.

The protein belongs to the SNF2/RAD54 helicase family. RapA subfamily. In terms of assembly, interacts with the RNAP. Has a higher affinity for the core RNAP than for the holoenzyme. Its ATPase activity is stimulated by binding to RNAP.

Transcription regulator that activates transcription by stimulating RNA polymerase (RNAP) recycling in case of stress conditions such as supercoiled DNA or high salt concentrations. Probably acts by releasing the RNAP, when it is trapped or immobilized on tightly supercoiled DNA. Does not activate transcription on linear DNA. Probably not involved in DNA repair. In Shewanella frigidimarina (strain NCIMB 400), this protein is RNA polymerase-associated protein RapA.